A 418-amino-acid chain; its full sequence is Elongation factor 1-gamma 1 (418 aa).

The GST N-terminal domain maps to 1–82 (MALVLHTFDG…YVTRSKSDNP (82 aa)). Positions 87 to 213 (SLIEYAHIEQ…GDVKQADSVP (127 aa)) constitute a GST C-terminal domain. A disordered region spans residues 211–265 (SVPQVQKKAAAPKEQKPKEAKKEAPKEAPKPKAAEKPEEEEEAPKPKPKNPLDLL). The span at 221–246 (APKEQKPKEAKKEAPKEAPKPKAAEK) shows a compositional bias: basic and acidic residues. One can recognise an EF-1-gamma C-terminal domain in the interval 258-418 (PKNPLDLLPP…EALLDAKCFK (161 aa)).

As to quaternary structure, EF-1 is composed of four subunits: alpha, beta, delta, and gamma.

In terms of biological role, probably plays a role in anchoring the complex to other cellular components. This Oryza sativa subsp. japonica (Rice) protein is Elongation factor 1-gamma 1.